The following is a 169-amino-acid chain: Ribosome maturation factor RimM (169 aa).

The PRC barrel domain occupies 94–167 (ENEFYFHEII…KITIEVMEGL (74 aa)).

This sequence belongs to the RimM family. In terms of assembly, binds ribosomal protein uS19.

Its subcellular location is the cytoplasm. An accessory protein needed during the final step in the assembly of 30S ribosomal subunit, possibly for assembly of the head region. Essential for efficient processing of 16S rRNA. May be needed both before and after RbfA during the maturation of 16S rRNA. It has affinity for free ribosomal 30S subunits but not for 70S ribosomes. This chain is Ribosome maturation factor RimM, found in Listeria welshimeri serovar 6b (strain ATCC 35897 / DSM 20650 / CCUG 15529 / CIP 8149 / NCTC 11857 / SLCC 5334 / V8).